Here is a 237-residue protein sequence, read N- to C-terminus: Uracil-DNA glycosylase (237 aa).

Asp-77 acts as the Proton acceptor in catalysis.

This sequence belongs to the uracil-DNA glycosylase (UDG) superfamily. UNG family.

The protein resides in the cytoplasm. It carries out the reaction Hydrolyzes single-stranded DNA or mismatched double-stranded DNA and polynucleotides, releasing free uracil.. Its function is as follows. Excises uracil residues from the DNA which can arise as a result of misincorporation of dUMP residues by DNA polymerase or due to deamination of cytosine. This chain is Uracil-DNA glycosylase, found in Acinetobacter baylyi (strain ATCC 33305 / BD413 / ADP1).